The sequence spans 194 residues: Adenylate kinase isoenzyme 1 (194 aa).

Residue M1 is modified to N-acetylmethionine. 18-23 (GSGKGT) serves as a coordination point for ATP. The residue at position 38 (S38) is a Phosphoserine. An NMP region spans residues 38–67 (STGDLLRAEVSSGSARGKKLSEIMEKGQLV). Residues T39, R44, 65-67 (QLV), 94-97 (GYPR), and Q101 each bind AMP. The LID stretch occupies residues 131–141 (KRGETSGRVDD). R132 contacts ATP. AMP-binding residues include R138 and R149. ATP is bound at residue G177.

This sequence belongs to the adenylate kinase family. AK1 subfamily. Monomer. Mg(2+) serves as cofactor.

It is found in the cytoplasm. The enzyme catalyses a ribonucleoside 5'-phosphate + ATP = a ribonucleoside 5'-diphosphate + ADP. The catalysed reaction is AMP + ATP = 2 ADP. It catalyses the reaction dAMP + ATP = dADP + ADP. It carries out the reaction dATP + AMP = dADP + ADP. The enzyme catalyses dAMP + dATP = 2 dADP. The catalysed reaction is a 2'-deoxyribonucleoside 5'-diphosphate + ATP = a 2'-deoxyribonucleoside 5'-triphosphate + ADP. It catalyses the reaction a ribonucleoside 5'-diphosphate + ATP = a ribonucleoside 5'-triphosphate + ADP. It carries out the reaction CDP + GTP = CTP + GDP. The enzyme catalyses GDP + ATP = GTP + ADP. The catalysed reaction is UDP + ATP = UTP + ADP. It catalyses the reaction GTP + UDP = UTP + GDP. It carries out the reaction dTDP + GTP = dTTP + GDP. The enzyme catalyses dCDP + GTP = dCTP + GDP. The catalysed reaction is dGDP + ATP = dGTP + ADP. It catalyses the reaction dADP + GTP = dATP + GDP. It carries out the reaction thiamine diphosphate + ADP = thiamine triphosphate + AMP. In terms of biological role, catalyzes the reversible transfer of the terminal phosphate group between ATP and AMP. Also displays broad nucleoside diphosphate kinase activity. Plays an important role in cellular energy homeostasis and in adenine nucleotide metabolism. Also catalyzes at a very low rate the synthesis of thiamine triphosphate (ThTP) from thiamine diphosphate (ThDP) and ADP. The chain is Adenylate kinase isoenzyme 1 from Oryctolagus cuniculus (Rabbit).